We begin with the raw amino-acid sequence, 247 residues long: Ribonuclease PH (247 aa).

Residues Arg87 and Gly125 to Arg127 each bind phosphate.

Belongs to the RNase PH family. In terms of assembly, homohexameric ring arranged as a trimer of dimers.

It carries out the reaction tRNA(n+1) + phosphate = tRNA(n) + a ribonucleoside 5'-diphosphate. Its function is as follows. Phosphorolytic 3'-5' exoribonuclease that plays an important role in tRNA 3'-end maturation. Removes nucleotide residues following the 3'-CCA terminus of tRNAs; can also add nucleotides to the ends of RNA molecules by using nucleoside diphosphates as substrates, but this may not be physiologically important. Probably plays a role in initiation of 16S rRNA degradation (leading to ribosome degradation) during starvation. The chain is Ribonuclease PH from Nostoc sp. (strain PCC 7120 / SAG 25.82 / UTEX 2576).